Consider the following 556-residue polypeptide: U-box domain-containing protein 38 (556 aa).

A disordered region spans residues 1–34; it reads MGKNGRLRWNPFSHRSSSSTSSSSRQQQQEQQPP. Positions 13-32 are enriched in low complexity; that stretch reads SHRSSSSTSSSSRQQQQEQQ. Residues 32–108 form the U-box domain; it reads QPPVEFLCPI…DTWCDTVGVS (77 aa). ARM repeat units follow at residues 256 to 295, 297 to 336, 338 to 378, 380 to 417, and 418 to 468; these read DEAR…NLSL, KKNK…SLSL, DDNK…HLTL, QTNR…NLAC, and CSEG…ALSH.

Binds to SD16, SD17, SD18 and SD129.

It catalyses the reaction S-ubiquitinyl-[E2 ubiquitin-conjugating enzyme]-L-cysteine + [acceptor protein]-L-lysine = [E2 ubiquitin-conjugating enzyme]-L-cysteine + N(6)-ubiquitinyl-[acceptor protein]-L-lysine.. The protein operates within protein modification; protein ubiquitination. Functions as an E3 ubiquitin ligase. The sequence is that of U-box domain-containing protein 38 (PUB38) from Arabidopsis thaliana (Mouse-ear cress).